Here is a 385-residue protein sequence, read N- to C-terminus: tRNA-specific 2-thiouridylase MnmA (385 aa).

ATP-binding positions include 18 to 25 (AMSGGVDS) and L44. C112 acts as the Nucleophile in catalysis. C112 and C209 are oxidised to a cystine. G136 contributes to the ATP binding site. The interval 159–161 (RDQ) is interaction with tRNA. The active-site Cysteine persulfide intermediate is the C209.

The protein belongs to the MnmA/TRMU family.

The protein resides in the cytoplasm. The catalysed reaction is S-sulfanyl-L-cysteinyl-[protein] + uridine(34) in tRNA + AH2 + ATP = 2-thiouridine(34) in tRNA + L-cysteinyl-[protein] + A + AMP + diphosphate + H(+). Its function is as follows. Catalyzes the 2-thiolation of uridine at the wobble position (U34) of tRNA, leading to the formation of s(2)U34. The polypeptide is tRNA-specific 2-thiouridylase MnmA (Methylorubrum populi (strain ATCC BAA-705 / NCIMB 13946 / BJ001) (Methylobacterium populi)).